Reading from the N-terminus, the 90-residue chain is uncharacterized protein (90 aa).

This is an uncharacterized protein from Thermoproteus tenax (TTV1).